The following is a 317-amino-acid chain: uncharacterized protein (317 aa).

It belongs to the asfivirus F317L family.

The protein localises to the virion. This is an uncharacterized protein from African swine fever virus (isolate Tick/South Africa/Pretoriuskop Pr4/1996) (ASFV).